The chain runs to 254 residues: MKFIVIKIGGSTLSDMHPSIINNIKHLRSNNIYPIIVHGGGPFINEALSNQQIEPHFVNGLRVTDKATMTITKHTLIADVNTALVAQFNQHQCSAIGLCGLDAQLFEITSFDQQYGYVGVPTALNKDALQYLCTKFVPIINSIGFNNHDGEFYNINADTLAYFIASSLKAPIYVLSNIAGVLINDVVIPQLPLVDIHQYIEHGDIYGGMIPKVLDAKNAIENGCPKVIIASGNKPNIIESIYNNDFVGTTILNS.

Residues 40-41 (GG), arginine 62, and asparagine 154 contribute to the substrate site.

It belongs to the acetylglutamate kinase family. ArgB subfamily.

The protein localises to the cytoplasm. The enzyme catalyses N-acetyl-L-glutamate + ATP = N-acetyl-L-glutamyl 5-phosphate + ADP. It participates in amino-acid biosynthesis; L-arginine biosynthesis; N(2)-acetyl-L-ornithine from L-glutamate: step 2/4. Its function is as follows. Catalyzes the ATP-dependent phosphorylation of N-acetyl-L-glutamate. The sequence is that of Acetylglutamate kinase from Staphylococcus aureus (strain Mu3 / ATCC 700698).